Consider the following 946-residue polypeptide: Bifunctional glutamine synthetase adenylyltransferase/adenylyl-removing enzyme (946 aa).

The adenylyl removase stretch occupies residues 1–440; sequence MKPLSSPLQQ…VFNELIGDDE (440 aa). An adenylyl transferase region spans residues 449–946; it reads SEQWRELWQD…ASWQKWLVEE (498 aa).

Belongs to the GlnE family. Mg(2+) serves as cofactor.

It carries out the reaction [glutamine synthetase]-O(4)-(5'-adenylyl)-L-tyrosine + phosphate = [glutamine synthetase]-L-tyrosine + ADP. The enzyme catalyses [glutamine synthetase]-L-tyrosine + ATP = [glutamine synthetase]-O(4)-(5'-adenylyl)-L-tyrosine + diphosphate. Functionally, involved in the regulation of glutamine synthetase GlnA, a key enzyme in the process to assimilate ammonia. When cellular nitrogen levels are high, the C-terminal adenylyl transferase (AT) inactivates GlnA by covalent transfer of an adenylyl group from ATP to specific tyrosine residue of GlnA, thus reducing its activity. Conversely, when nitrogen levels are low, the N-terminal adenylyl removase (AR) activates GlnA by removing the adenylyl group by phosphorolysis, increasing its activity. The regulatory region of GlnE binds the signal transduction protein PII (GlnB) which indicates the nitrogen status of the cell. This chain is Bifunctional glutamine synthetase adenylyltransferase/adenylyl-removing enzyme, found in Escherichia coli (strain K12 / MC4100 / BW2952).